The following is a 497-amino-acid chain: 3-octaprenyl-4-hydroxybenzoate carboxy-lyase (497 aa).

Asparagine 175 lines the Mn(2+) pocket. Prenylated FMN-binding positions include 178 to 180 (IYR), 192 to 194 (RWL), and 197 to 198 (RG). Mn(2+) is bound at residue glutamate 241. The active-site Proton donor is the aspartate 290.

Belongs to the UbiD family. Homohexamer. It depends on prenylated FMN as a cofactor. The cofactor is Mn(2+).

Its subcellular location is the cell membrane. The catalysed reaction is a 4-hydroxy-3-(all-trans-polyprenyl)benzoate + H(+) = a 2-(all-trans-polyprenyl)phenol + CO2. It functions in the pathway cofactor biosynthesis; ubiquinone biosynthesis. Its function is as follows. Catalyzes the decarboxylation of 3-octaprenyl-4-hydroxy benzoate to 2-octaprenylphenol, an intermediate step in ubiquinone biosynthesis. The chain is 3-octaprenyl-4-hydroxybenzoate carboxy-lyase from Shigella dysenteriae serotype 1 (strain Sd197).